The sequence spans 114 residues: Protein D2 (114 aa).

The protein belongs to the phosphatidylethanolamine-binding protein family.

This Onchocerca volvulus protein is Protein D2 (D2).